The chain runs to 143 residues: Putative pre-16S rRNA nuclease (143 aa).

Belongs to the YqgF nuclease family.

It is found in the cytoplasm. Its function is as follows. Could be a nuclease involved in processing of the 5'-end of pre-16S rRNA. This is Putative pre-16S rRNA nuclease from Leuconostoc mesenteroides subsp. mesenteroides (strain ATCC 8293 / DSM 20343 / BCRC 11652 / CCM 1803 / JCM 6124 / NCDO 523 / NBRC 100496 / NCIMB 8023 / NCTC 12954 / NRRL B-1118 / 37Y).